We begin with the raw amino-acid sequence, 484 residues long: MDFTSLETTTFEEVVIALGSNVGNRMNNFKEALRLMKDYGISVTRHSCLYETEPVHVTDQPRFLNAAIRGVTKLKPHELLNVLKKIEKEMGREENGLRYGPRPLDLDILFYGKHKIISDKLIIPHERIWERPFVLAPLVDLLGTEDIDNDKIVAYWHSLSMHSGGIFQAWERLGGESLLGKDGIIQRVIPIGDHLWDFSKKTYVMGILNLTPDSFSDGGKFQSVDTAVSRVRSMISEGVDIIDIGAQSTRPMASRISSQEEIDRLIPVLKVVRGMAEMKGKLISVDTFNSEVALEAIRNGADILNDVSGGSLDENMHKVVADSDVPYMIMHMRGDPCTMQNKENLEYNEICKDVATELYERVREAELSGIPAWRIMIDPGIGFSKGIDHNLDIVMELPKIREEMAKKSIGLSHAPILIGPSRKRFLGDICGRPEASERDAATVACVTAGILKGANIIRVHNVRDNVDAARLCDAMMTKRFKNVD.

An HPPK region spans residues 15–141; that stretch reads VIALGSNVGN…PFVLAPLVDL (127 aa). One can recognise a Pterin-binding domain in the interval 202–470; that stretch reads TYVMGILNLT…NVRDNVDAAR (269 aa). The segment at 204-484 is DHPS; that stretch reads VMGILNLTPD…MMTKRFKNVD (281 aa). Mg(2+) is bound at residue asparagine 209. Residues threonine 249, aspartate 286, asparagine 305, aspartate 378, lysine 423, and 458 to 460 each bind (7,8-dihydropterin-6-yl)methyl diphosphate; that span reads RVH.

The protein in the N-terminal section; belongs to the HPPK family. It in the C-terminal section; belongs to the DHPS family. Mg(2+) is required as a cofactor. In terms of tissue distribution, expressed exclusively in reproductive tissues.

The protein resides in the cytoplasm. It is found in the cytosol. It carries out the reaction 6-hydroxymethyl-7,8-dihydropterin + ATP = (7,8-dihydropterin-6-yl)methyl diphosphate + AMP + H(+). The catalysed reaction is (7,8-dihydropterin-6-yl)methyl diphosphate + 4-aminobenzoate = 7,8-dihydropteroate + diphosphate. It functions in the pathway cofactor biosynthesis; tetrahydrofolate biosynthesis; 2-amino-4-hydroxy-6-hydroxymethyl-7,8-dihydropteridine diphosphate from 7,8-dihydroneopterin triphosphate: step 4/4. Its pathway is cofactor biosynthesis; tetrahydrofolate biosynthesis; 7,8-dihydrofolate from 2-amino-4-hydroxy-6-hydroxymethyl-7,8-dihydropteridine diphosphate and 4-aminobenzoate: step 1/2. With respect to regulation, inhibited by sulfanilamide. In terms of biological role, catalyzes the first two consecutive steps of tetrahydrofolate biosynthesis. Plays a role in seed stress response and survival. The protein is Folate synthesis bifunctional protein of Arabidopsis thaliana (Mouse-ear cress).